The sequence spans 295 residues: Protein SSO2 (295 aa).

Residues 1–269 (MSNANPYENN…ARKARKNKIR (269 aa)) lie on the Cytoplasmic side of the membrane. 2 positions are modified to phosphoserine: Ser-31 and Ser-34. Residues 39–100 (AFMNKINSIN…ATDLQYQLKA (62 aa)) adopt a coiled-coil conformation. Residues 194 to 256 (LAEVQARHQE…EQGVGHTNKA (63 aa)) enclose the t-SNARE coiled-coil homology domain. Residues 270–291 (CLIICFIIFAIVVVVVVVPSVV) form a helical; Anchor for type IV membrane protein membrane-spanning segment. The Extracellular portion of the chain corresponds to 292-295 (ETRK).

It belongs to the syntaxin family.

Its subcellular location is the membrane. Functionally, required for vesicle fusion with the plasma membrane. The chain is Protein SSO2 (SSO2) from Saccharomyces cerevisiae (strain ATCC 204508 / S288c) (Baker's yeast).